The primary structure comprises 609 residues: MTDLSKIRNFSIIAHIDHGKSTLADRLIQVCGGLTAREMSEQVLDNMDIEKERGITIKAQTVRLNYTASDGETYELNLMDTPGHVDFAYEVSRSLAACEGALLVVDAAQGVEAQTLANVYQSIEHDHEIVPVINKIDLPAAEPEQVRAEIEDIIGLDASEAVMTSAKSGIGIEDVLEAIVAKIPPPEGDRDAPLKASLVDSWYDPYLGVVILVRVIDGVLTKGLNVRFMQGGTQHLIDRVGCFTPKRVDLPEIGPGEIGFITAQIKEVEQARVGDTITTVKNGAPEPLKGYKEVQPVVFCGLFPVDAADFEKLRESIGKLRLNDASFSYEMESSAALGFGFRAGFLGLLHLEIIQERLSREYDLDLITTAPSVVYTVHLAHTKTEDAKVIEIHNPADWPDVNRIDVIEEPWIKATIYTPDDYLGAILKLCQDRRGIQTNLTYVGGASTLRAQVTYDLPLNEVVFDFYDRLKSISRGYASFDYEQIGSREGDLVKMNILVNNEPVDALSLIVHRSVAEERGRGMCERLKDLIPRHLFKIPIQAAIGGKIIARETIAALRKDVTAKCYGGDISRKKKLLEKQKKGKARMREYGNVSIPQEAFIAALRMGEE.

The region spanning 5-187 is the tr-type G domain; it reads SKIRNFSIIA…AIVAKIPPPE (183 aa). GTP is bound by residues 17–22 and 134–137; these read DHGKST and NKID.

Belongs to the TRAFAC class translation factor GTPase superfamily. Classic translation factor GTPase family. LepA subfamily.

It localises to the cell inner membrane. The catalysed reaction is GTP + H2O = GDP + phosphate + H(+). Functionally, required for accurate and efficient protein synthesis under certain stress conditions. May act as a fidelity factor of the translation reaction, by catalyzing a one-codon backward translocation of tRNAs on improperly translocated ribosomes. Back-translocation proceeds from a post-translocation (POST) complex to a pre-translocation (PRE) complex, thus giving elongation factor G a second chance to translocate the tRNAs correctly. Binds to ribosomes in a GTP-dependent manner. The chain is Elongation factor 4 from Erythrobacter litoralis (strain HTCC2594).